Consider the following 2302-residue polypeptide: Phosphatidylinositol phosphatase PTPRQ (2302 aa).

The N-terminal stretch at 1 to 18 is a signal peptide; it reads MMDFHFSFLFLLIGTSES. Residues 19–1908 are Extracellular-facing; sequence QVDVSSSFDG…GEGLSERTVE (1890 aa). The N-linked (GlcNAc...) asparagine glycan is linked to Asn-54. 17 consecutive Fibronectin type-III domains span residues 60–155, 159–254, 310–398, 401–501, 474–566, 570–665, 670–759, 764–854, 859–948, 953–1053, 1058–1151, 1156–1243, 1248–1341, 1345–1431, 1435–1539, 1544–1642, and 1647–1748; these read PPVF…TAES, KVVN…SSST, PPQN…PPDV, AVFD…PHND, GFYE…TVRT, VPSS…TPED, SPQD…TSET, APEN…TEED, PPQN…TPEG, PPND…TDQD, PVGN…TEED, PPII…TDES, PPQN…TQES, AVRN…LPET, APTN…TLPG, PPEN…TLES, and PPNN…IKAP. Asn-162, Asn-169, Asn-318, Asn-354, and Asn-389 each carry an N-linked (GlcNAc...) asparagine glycan. N-linked (GlcNAc...) asparagine glycosylation is found at Asn-733 and Asn-746. N-linked (GlcNAc...) asparagine glycans are attached at residues Asn-904, Asn-998, Asn-1010, and Asn-1040. N-linked (GlcNAc...) asparagine glycosylation is found at Asn-1251 and Asn-1256. A glycan (N-linked (GlcNAc...) asparagine) is linked at Asn-1805. The helical transmembrane segment at 1909-1929 threads the bilayer; the sequence is IILSVTLCILSIILLGTAIFA. Residues 1930–2302 lie on the Cytoplasmic side of the membrane; that stretch reads FVRIRQKQKE…VELEWEETTM (373 aa). Residues 2006-2262 enclose the Tyrosine-protein phosphatase domain; it reads FQEEFSELPK…IFLHQCILDL (257 aa). Residue Cys-2203 is the Phosphocysteine intermediate of the active site.

Belongs to the protein-tyrosine phosphatase family. Receptor class 2A subfamily. In terms of assembly, interacts with TPRN. TPRN, CLIC5 and PTPQR form concentric rings at the base of stereocilia and may form a complex.

It localises to the cell projection. The protein resides in the stereocilium. Its subcellular location is the apical cell membrane. It is found in the basal cell membrane. It carries out the reaction a 1,2-diacyl-sn-glycero-3-phospho-(1D-myo-inositol-3,4,5-trisphosphate) + H2O = a 1,2-diacyl-sn-glycero-3-phospho-(1D-myo-inositol-4,5-bisphosphate) + phosphate. The catalysed reaction is a 1,2-diacyl-sn-glycero-3-phospho-(1D-myo-inositol-3,4,5-trisphosphate) + H2O = a 1,2-diacyl-sn-glycero-3-phospho-(1D-myo-inositol-3,4-bisphosphate) + phosphate. The enzyme catalyses a 1,2-diacyl-sn-glycero-3-phospho-(1D-myo-inositol-3,5-bisphosphate) + H2O = a 1,2-diacyl-sn-glycero-3-phospho-(1D-myo-inositol-5-phosphate) + phosphate. It catalyses the reaction a 1,2-diacyl-sn-glycero-3-phospho-(1D-myo-inositol-3,5-bisphosphate) + H2O = a 1,2-diacyl-sn-glycero-3-phospho-(1D-myo-inositol-3-phosphate) + phosphate. It carries out the reaction a 1,2-diacyl-sn-glycero-3-phospho-(1D-myo-inositol-4,5-bisphosphate) + H2O = a 1,2-diacyl-sn-glycero-3-phospho-(1D-myo-inositol 4-phosphate) + phosphate. Functionally, dephosphorylates phosphatidylinositol phosphates, such as phosphatidylinositol 3,4,5-trisphosphate (PIP3) and phosphatidylinositol 3,5-diphosphates, with preference for PIP3. Phosphate can be hydrolyzed from the D3 and D5 positions in the inositol ring. Has low tyrosine-protein phosphatase activity in vitro; however, the relevance of such activity in vivo is unclear. Plays an important role in adipogenesis of mesenchymal stem cells (MSCs). Regulates the phosphorylation state of AKT1 by regulating the levels of PIP3 level in MSCs and preadipocyte cells. Required for hair bundle maturation, a process that enables hair cells to detect and transmit sound and balance signals effectively, therefore affecting auditory function. May act by regulating the level of phosphatidylinositol 4,5-bisphosphate (PIP2) level in the basal region of hair bundles. The polypeptide is Phosphatidylinositol phosphatase PTPRQ (Ptprq) (Rattus norvegicus (Rat)).